The primary structure comprises 280 residues: Diaminopimelate epimerase (280 aa).

Substrate-binding residues include Asn11 and Asn62. Catalysis depends on Cys71, which acts as the Proton donor. Residues Gly72–Asn73, Asn160, Asn193, and Glu211–Arg212 each bind substrate. Cys220 acts as the Proton acceptor in catalysis. Gly221–Thr222 contributes to the substrate binding site.

It belongs to the diaminopimelate epimerase family. In terms of assembly, homodimer.

The protein localises to the cytoplasm. The catalysed reaction is (2S,6S)-2,6-diaminopimelate = meso-2,6-diaminopimelate. The protein operates within amino-acid biosynthesis; L-lysine biosynthesis via DAP pathway; DL-2,6-diaminopimelate from LL-2,6-diaminopimelate: step 1/1. Its function is as follows. Catalyzes the stereoinversion of LL-2,6-diaminopimelate (L,L-DAP) to meso-diaminopimelate (meso-DAP), a precursor of L-lysine and an essential component of the bacterial peptidoglycan. The sequence is that of Diaminopimelate epimerase from Acetivibrio thermocellus (strain ATCC 27405 / DSM 1237 / JCM 9322 / NBRC 103400 / NCIMB 10682 / NRRL B-4536 / VPI 7372) (Clostridium thermocellum).